A 149-amino-acid chain; its full sequence is 3-hydroxyacyl-[acyl-carrier-protein] dehydratase FabZ (149 aa).

Residue histidine 50 is part of the active site.

This sequence belongs to the thioester dehydratase family. FabZ subfamily.

The protein resides in the cytoplasm. It catalyses the reaction a (3R)-hydroxyacyl-[ACP] = a (2E)-enoyl-[ACP] + H2O. Functionally, involved in unsaturated fatty acids biosynthesis. Catalyzes the dehydration of short chain beta-hydroxyacyl-ACPs and long chain saturated and unsaturated beta-hydroxyacyl-ACPs. The chain is 3-hydroxyacyl-[acyl-carrier-protein] dehydratase FabZ from Pediococcus pentosaceus (strain ATCC 25745 / CCUG 21536 / LMG 10740 / 183-1w).